Here is a 312-residue protein sequence, read N- to C-terminus: Olfactory receptor 4F15 (312 aa).

The Extracellular segment spans residues 1-25 (MNGMNHSVVSEFVFMGLTNSREIQL). Residue Asn-5 is glycosylated (N-linked (GlcNAc...) asparagine). A helical membrane pass occupies residues 26-49 (LLFVFSLLFYFASMMGNLVIVFTV). Residues 50–57 (TMDAHLHS) lie on the Cytoplasmic side of the membrane. The helical transmembrane segment at 58-79 (PMYFLLANLSIIDMAFCSITAP) threads the bilayer. At 80 to 100 (KMICDIFKKHKAISFRGCITQ) the chain is on the extracellular side. A disulfide bridge links Cys-97 with Cys-189. Residues 101–120 (IFFSHALGGTEMVLLIAMAF) form a helical membrane-spanning segment. At 121–139 (DRYMAICKPLHYLTIMSPR) the chain is on the cytoplasmic side. A helical membrane pass occupies residues 140–158 (MCLYFLATSSIIGLIHSLV). Residues 159 to 195 (QLVFVVDLPFCGPNIFDSFYCDLPRLLRLACTNTQEL) lie on the Extracellular side of the membrane. A helical transmembrane segment spans residues 196-219 (EFMVTVNSGLISVGSFVLLVISYI). At 220 to 235 (FILFTVWKHSSGGLAK) the chain is on the cytoplasmic side. Residues 236-258 (ALSTLSAHVTVVILFFGPLMFFY) form a helical membrane-spanning segment. Residues 259–269 (TWPSPTSHLDK) lie on the Extracellular side of the membrane. A helical membrane pass occupies residues 270-289 (YLAIFDAFITPFLNPVIYTF). Residues 290–312 (RNKDMKVAMRRLCSRLAHFTKIL) are Cytoplasmic-facing.

This sequence belongs to the G-protein coupled receptor 1 family.

It is found in the cell membrane. In terms of biological role, odorant receptor. The polypeptide is Olfactory receptor 4F15 (OR4F15) (Homo sapiens (Human)).